The chain runs to 89 residues: Acyl carrier protein MbtL (89 aa).

A Carrier domain is found at Asn8–Pro83. Position 43 is an O-(pantetheine 4'-phosphoryl)serine (Ser43).

In terms of processing, 4'-phosphopantetheine is transferred from CoA to a specific serine of apo-ACP, leading to the activated holo-ACP form.

Its subcellular location is the cytoplasm. The protein operates within siderophore biosynthesis; mycobactin biosynthesis. Acyl carrier protein involved in the formation of acyl-S-ACP intermediates within the mycobactin biosynthesis process. The sequence is that of Acyl carrier protein MbtL (mbtL) from Mycolicibacterium paratuberculosis (strain ATCC BAA-968 / K-10) (Mycobacterium paratuberculosis).